A 359-amino-acid polypeptide reads, in one-letter code: TGACG-sequence-specific DNA-binding protein TGA-1A (359 aa).

Basic and acidic residues predominate over residues 44-54 (KRLDNETEDTS). The tract at residues 44–72 (KRLDNETEDTSHGTVGTSNRYEPETSKPV) is disordered. The bZIP domain maps to 72–135 (VEKVLRRLAQ…GGVDASQLSY (64 aa)). Positions 73–125 (EKVLRRLAQNREAARKSRLRKKAYVQQLENSKLKLIQLEQELERARKQGMCVG) form a coiled coil. The tract at residues 74–94 (KVLRRLAQNREAARKSRLRKK) is basic motif. The leucine-zipper stretch occupies residues 100-114 (LENSKLKLIQLEQEL). Positions 143-354 (TAVFDMEYGH…RVLSSQWATR (212 aa)) constitute a DOG1 domain.

It belongs to the bZIP family. Binds DNA as a dimer.

Its subcellular location is the nucleus. Transcriptional activator that binds specifically to the DNA sequence 5'-TGACG-3'. Recognizes ocs elements like the as-1 motif of the cauliflower mosaic virus 35S promoter. Binding to the as-1-like cis elements mediate auxin- and salicylic acid-inducible transcription. Could also bind to the Hex-motif (5'-TGACGTGG-3') another cis-acting element found in plant histone promoters. This Nicotiana tabacum (Common tobacco) protein is TGACG-sequence-specific DNA-binding protein TGA-1A (TGA1A).